We begin with the raw amino-acid sequence, 2511 residues long: MADPIMDLFDDTPLFNLDSLPEDAFSQGSSDPVEEALKLALGQVDPPTDPIPDPGVPILSDVVTDPALIPTPVSVPLQNLQTQQLSQIPHEVSVASAPISIQPSLSVASNSSGAATVLLSSSLGVPVSGAQVTPQQQTQQITAVTQQAAGQHAPKIVILKGPQGQTQVLQGVTGATGSPGKVTLARVLTGTPLRPGMAVVSGGTVLNATSPAQGQVKVGTGVQRLVQTANGPMKQVLLTSVPQTQSQVQTQPVQVQIPVQTQLQSPSQPQQLQAQIQAQTQVALQTQAQTQTPTSPAAAGIRPQSVTLSAVPQQVRFVLGSLPGKLVLQGDQLAALAQAKAGQTGAQAKVLTIQLQVQQQPNQQGAKFQLVSGAANAGGSPQVVQISQGQGGQRLAVPLKLLLQPQSNTVSSAGGAVSVVKVINTSAAGSTSGTTTTAASSGVRLAKIQEPVRRVETLCKQEKANRIVAEAIARAKARGERNIPRVLNQDELPAGQTSADLEGAGGATGAKKKGGGGVGGGGGGSKKKSPSAGGAKMVVGGDKKSKAKTPVIPGGGSKSKSKTKLNTITLVGKKRKRNPSSDHSDVDLSPPVSPRTLEEEMSQKRRSNRQVKRKKYTEDLDIKITDDEDELDADVDVTTTPMPAVGHVQPLGAELPPELDGDGLPSMQFFVENPSEEDAAIVDKILSMRVTKKEARQYTNVEEFFVKYKNYSYMHCEWASLEQLERDKRIHQKLKRFKTKQAQMRNLFQEDEEPFNPDYVEVDRILDESHSVDKDNGEPVVYYLVKWCSLPYEDATWELKEDVDEGKVEEFRKIESRQPRLKRTPRPAASAWKKLDESTEYKNGNQLREYQLEGVNWLLFNWYNRQNCILADEMGLGKTIQSIALLSEMFSAGVQSPFMIIAPLSTITNWEREFSNWTDMNAIVYHGSLASRQMIQQYEMYCKDDKGHLIPGAYKFDALITTFEMILSDCPELREISWRCVVIDEAHRLKNRNCKLLDSLKMLEIEHKVLLTGTPLQNTVEELFSLLHFLEPAQFPSEIEFLREFGDLKTEEQVQKLQSILKPMMLRRLKEDVEKNLAPKQETIIEVELTDVQKKYYRAILERNFSFLSMGATQNSNVPNLLNTMMELRKCCNHPYLITGAEEKIVSELREVYDPLAPDFHLQALVRSAGKLVLLDKLLPRLKAGGHKVLIFSQMVRCLDILEDYLIHKRYLYERIDGRVRGNLRQAAIDRFSKPDSDRFVFLLCTRAGGLGINLTAADTCVIFDSDWNPQNDLQAQARCHRIGQSKAVKVYRLITRNSYEREMLDKASLKLGLDRAVLQSMSGNKESSIQQFSKKEIEDLLRKGAYAAIMDENDEGSRFCEEDIDQILQRRATTITIESEGKGSTFSKASFVASENRTDIALDDPEFWQKWAKKADIDMDSLNRKNTLVIDTPRVRKQTRQFSSLRGEGGDLSDLDSDDDYPPHNSRQSRASRRSDRHSGGGYGRTDCFRVEKHLLVYGWGRWRDILSHARCKRRLSERDVETICRVILVFCLIHYRGDENIKSFIWELITPPENGREPQALLNHSGLSIPVPRGRKGKRVKAQSSFDVQKVEWIRKYNPDSLLLDDSYRKHLKHQCNKVLLRVRMLYYLKQEVIGEHADSVLSGADARDIDIWLPEMEQQDVPSGWWDAEADRCLLIGVYKHGYEMYTTMRADPCLCFVERCGRPNEQDINAEQQAADPELGEGGDYDKYSEDPEFKPATRHAKEMYEEGDSVNADGEICVEDRSAPMQVEGPSSGSSDLCYWPTSSSLTARLRRLITAYQRSYRREQLKIEAAEKGDRRRRRCEQATKLKEIARQERQQRWTRREECDFYRVVSTFGVERIKKETDAPEGDEHHMDWNRFRSFARLDKKTDESLTRYFKCFMSMCRKVCHIRPGRGDESQDMSQSLAPITEERASRTLYRVTLLCRLRERVLPHPSLEERLSLAPQTSDLPSWWSIPKHDHELLLAAARHGVSRTELSIFSDPLYSFSQSRLDYLQNQQAQAAAQIHAFSQSQDPAGIKEEGLEDESRLLGVEALCPSDSPAMLLSHSDSKVGIQAGWVWKKSKNNGPSERKLGGGGGGASDSDSDSDSGSSSSSRHSGSSDDSGDSDVEREQAALKMCDGDEENSILSLTPSQEGAPPESLTDPLRVDWPKDRILINRIENLCSLVITGHWPSGRRYISDIQLNTVSDEHELGDDLGYSRVARKINSTLSAEALEGQESEFTVKLLKEEGLKLTFSKQALMPNGEGSARKKRKDHELEDAEGVLHAPRRRDLPNWLKENPDYEVEGDMLELLVNRTKRKRRRKRVEKGAALTGSERVKVIDIRTGKKFAGVFGPALQDLREHLEENPDHAVAPEWSETVRHSGFLPEILFHRLLSPHASIPKKSRHYLHTPSLQTDDPLLGGGEGEMLVSDGAYMMDDEDLEDGGHLTSSHHFLTPAYDVKMEPSALDMDGGDSLSQGGYDSSDREAILDDVIMAPKHSDTSSSSED.

Residues 484–615 (PRVLNQDELP…RSNRQVKRKK (132 aa)) are disordered. Positions 515-524 (GGGVGGGGGG) are enriched in gly residues. Over residues 604 to 615 (KRRSNRQVKRKK) the composition is skewed to basic residues. Chromo domains are found at residues 680-745 (AIVD…AQMR) and 760-826 (VEVD…RTPR). In terms of domain architecture, Helicase ATP-binding spans 859-1033 (LFNWYNRQNC…FSLLHFLEPA (175 aa)). 872 to 879 (DEMGLGKT) is a binding site for ATP. The DEAH box motif lies at 984-987 (DEAH). Positions 1174 to 1330 (LLDKLLPRLK…SMSGNKESSI (157 aa)) constitute a Helicase C-terminal domain. Disordered regions lie at residues 1440 to 1482 (TRQF…HSGG), 1715 to 1736 (EQQA…SEDP), 2086 to 2168 (SKNN…LTDP), and 2468 to 2511 (PSAL…SSED). Residues 1452–1461 (DLSDLDSDDD) show a composition bias toward acidic residues. The span at 2111-2125 (DSGSSSSSRHSGSSD) shows a compositional bias: low complexity.

Belongs to the SNF2/RAD54 helicase family. CHD8 subfamily. As to quaternary structure, component of some MLL1/MLL complex.

It is found in the nucleus. The enzyme catalyses ATP + H2O = ADP + phosphate + H(+). In terms of biological role, ATP-dependent chromatin-remodeling factor, it slides nucleosomes along DNA; nucleosome sliding requires ATP. Acts as a transcription repressor by remodeling chromatin structure and recruiting histone H1 to target genes. Suppresses p53/tp53-mediated apoptosis by recruiting histone H1 and preventing p53/tp53 transactivation activity. Acts as a negative regulator of Wnt signaling pathway by regulating beta-catenin (ctnnb1) activity. Negatively regulates ctnnb1-targeted gene expression by being recruited specifically to the promoter regions of several ctnnb1 responsive genes. May also act as a transcription activator by participating in efficient U6 RNA polymerase III transcription. The polypeptide is Chromodomain-helicase-DNA-binding protein 8 (Danio rerio (Zebrafish)).